The sequence spans 378 residues: Chaperone protein DnaJ (378 aa).

In terms of domain architecture, J spans 5 to 70; sequence DYYEVLGVAK…QKRAAYDQYG (66 aa). The CR-type zinc-finger motif lies at 138–216; sequence GYDTQIRVPS…CHGSGKVKET (79 aa). 8 residues coordinate Zn(2+): C151, C154, C168, C171, C190, C193, C204, and C207. CXXCXGXG motif repeat units lie at residues 151 to 158, 168 to 175, 190 to 197, and 204 to 211; these read CEVCHGSG, CPTCHGQG, CPKCHGTG, and CAHCHGSG.

This sequence belongs to the DnaJ family. In terms of assembly, homodimer. Zn(2+) serves as cofactor.

The protein resides in the cytoplasm. Functionally, participates actively in the response to hyperosmotic and heat shock by preventing the aggregation of stress-denatured proteins and by disaggregating proteins, also in an autonomous, DnaK-independent fashion. Unfolded proteins bind initially to DnaJ; upon interaction with the DnaJ-bound protein, DnaK hydrolyzes its bound ATP, resulting in the formation of a stable complex. GrpE releases ADP from DnaK; ATP binding to DnaK triggers the release of the substrate protein, thus completing the reaction cycle. Several rounds of ATP-dependent interactions between DnaJ, DnaK and GrpE are required for fully efficient folding. Also involved, together with DnaK and GrpE, in the DNA replication of plasmids through activation of initiation proteins. The polypeptide is Chaperone protein DnaJ (Burkholderia vietnamiensis (strain G4 / LMG 22486) (Burkholderia cepacia (strain R1808))).